The following is a 439-amino-acid chain: Xylose isomerase (439 aa).

Active-site residues include H101 and D104. 7 residues coordinate Mg(2+): E232, E268, H271, D296, D307, D309, and D339.

This sequence belongs to the xylose isomerase family. As to quaternary structure, homotetramer. Mg(2+) is required as a cofactor.

The protein localises to the cytoplasm. It carries out the reaction alpha-D-xylose = alpha-D-xylulofuranose. The sequence is that of Xylose isomerase from Actinobacillus pleuropneumoniae serotype 5b (strain L20).